We begin with the raw amino-acid sequence, 349 residues long: uncharacterized protein (349 aa).

Positions 1–26 are cleaved as a signal peptide; the sequence is MQSHAGGSRAPLGLLLICLCLPGLFA. 2 disordered regions span residues 30 to 113 and 322 to 349; these read GAPE…QGMA and YPAG…GITP. The span at 39–52 shows a compositional bias: polar residues; sequence HSGQPSFTSLLNPG. Residues 90-101 are compositionally biased toward pro residues; that stretch reads NGPPFWGPPPME.

In terms of assembly, binds to numerous extracellular matrix proteins.

The protein resides in the secreted. Its subcellular location is the extracellular space. It localises to the extracellular matrix. This is an uncharacterized protein from Mus musculus (Mouse).